A 471-amino-acid chain; its full sequence is Nuclear distribution protein PAC1 (471 aa).

Residues 9–41 (QAEELHKSMIAYLLSVNLSKSAAALREELADSV) enclose the LisH domain. Residues 60 to 87 (TSVVRLQKKIMDLESRNAALQQELDSAT) adopt a coiled-coil conformation. Polar residues predominate over residues 83–93 (LDSATPTSLSR). Positions 83–108 (LDSATPTSLSRRNQDPASWLPRAPAR) are disordered. 8 WD repeats span residues 113 to 154 (SHRG…RTIK), 156 to 196 (HTRA…KNIR), 200 to 247 (GHDH…CVKT), 250 to 289 (GHLD…TKST), 292 to 352 (GHEH…IKTL), 354 to 393 (GHDN…KCVR), 398 to 428 (AHGH…INGQ), and 429 to 467 (GTPS…MNVR). The segment at 424–449 (GINGQGTPSMNGVSISTTSKKEDTGG) is disordered. A compositionally biased stretch (polar residues) spans 428–441 (QGTPSMNGVSISTT).

It belongs to the WD repeat LIS1/nudF family. Self-associates. Interacts with NDL1 and dynein.

It localises to the cytoplasm. The protein resides in the cytoskeleton. Its subcellular location is the spindle pole. Functionally, positively regulates the activity of the minus-end directed microtubule motor protein dynein. May enhance dynein-mediated microtubule sliding by targeting dynein to the microtubule plus end. Required for nuclear migration during vegetative growth as well as development. Required for retrograde early endosome (EE) transport from the hyphal tip. Required for localization of dynein to the mitotic spindle poles. Recruits additional proteins to the dynein complex at SPBs. This is Nuclear distribution protein PAC1 from Coccidioides posadasii (strain C735) (Valley fever fungus).